The following is an 80-amino-acid chain: Large ribosomal subunit protein uL24 (80 aa).

The segment at 53-80 is disordered; sequence HMRPTQSNPQGSIIEREFPIHASNVKKS.

It belongs to the universal ribosomal protein uL24 family. In terms of assembly, part of the 50S ribosomal subunit.

Functionally, one of two assembly initiator proteins, it binds directly to the 5'-end of the 23S rRNA, where it nucleates assembly of the 50S subunit. Its function is as follows. One of the proteins that surrounds the polypeptide exit tunnel on the outside of the subunit. This Chlorobium luteolum (strain DSM 273 / BCRC 81028 / 2530) (Pelodictyon luteolum) protein is Large ribosomal subunit protein uL24.